The primary structure comprises 622 residues: Prolactin receptor (622 aa).

The N-terminal stretch at 1-24 (MKENVASATVFTLLLFLNTCLLNG) is a signal peptide. The Extracellular portion of the chain corresponds to 25 to 234 (QLPPGKPEIF…QIPSDFTMND (210 aa)). Fibronectin type-III domains are found at residues 27–128 (PPGK…VQPD) and 129–229 (PPLE…IPSD). An intrachain disulfide couples Cys-36 to Cys-46. N-linked (GlcNAc...) asparagine glycosylation occurs at Asn-59. Cys-75 and Cys-86 are oxidised to a cystine. An N-linked (GlcNAc...) asparagine glycan is attached at Asn-104. 2 residues coordinate Zn(2+): Asp-211 and His-212. The WSXWS motif signature appears at 215–219 (WSAWS). N-linked (GlcNAc...) asparagine glycosylation is present at Asn-233. The chain crosses the membrane as a helical span at residues 235 to 258 (TTVWISVAVLSAVICLIIVWAVAL). Topologically, residues 259-622 (KGYSMVTCIF…DPACFTHSFH (364 aa)) are cytoplasmic. A Box 1 motif motif is present at residues 267–275 (IFPPVPGPK). Disordered regions lie at residues 326–378 (MSVH…YDPE), 461–505 (SSQT…GSAK), and 520–545 (ALSLLPKQRENSGKPKKPGTPENNKE). The span at 466-486 (KSREEGKATQQREVESFHSET) shows a compositional bias: basic and acidic residues.

This sequence belongs to the type I cytokine receptor family. Type 1 subfamily. In terms of assembly, homodimer upon hormone binding. Interacts with SMARCA1. Interacts with GH1. Interacts with CSH. Interacts with NEK3 and VAV2 and this interaction is prolactin-dependent. In terms of tissue distribution, expressed in breast, placenta, kidney, liver and pancreas.

Its subcellular location is the membrane. The protein localises to the secreted. In terms of biological role, this is a receptor for the anterior pituitary hormone prolactin (PRL). Acts as a prosurvival factor for spermatozoa by inhibiting sperm capacitation through suppression of SRC kinase activation and stimulation of AKT. Isoform 4 is unable to transduce prolactin signaling. Isoform 6 is unable to transduce prolactin signaling. This is Prolactin receptor (PRLR) from Homo sapiens (Human).